The primary structure comprises 418 residues: Tryptophan synthase beta chain (418 aa).

Positions 1–12 (MTSTLPTANTPD) are enriched in polar residues. The segment at 1–21 (MTSTLPTANTPDPASLMPSVR) is disordered. Lys111 is subject to N6-(pyridoxal phosphate)lysine.

The protein belongs to the TrpB family. In terms of assembly, tetramer of two alpha and two beta chains. The cofactor is pyridoxal 5'-phosphate.

It catalyses the reaction (1S,2R)-1-C-(indol-3-yl)glycerol 3-phosphate + L-serine = D-glyceraldehyde 3-phosphate + L-tryptophan + H2O. The protein operates within amino-acid biosynthesis; L-tryptophan biosynthesis; L-tryptophan from chorismate: step 5/5. Functionally, the beta subunit is responsible for the synthesis of L-tryptophan from indole and L-serine. The sequence is that of Tryptophan synthase beta chain from Synechococcus sp. (strain CC9311).